A 276-amino-acid chain; its full sequence is Anthranilate synthase beta subunit 1, chloroplastic (276 aa).

Residues 1–50 (MAASTLYKSCLLQPKSGSTTRRLNPSLVNPLTNPTRVSVLGKSRRDVFAK) constitute a chloroplast transit peptide. In terms of domain architecture, Glutamine amidotransferase type-1 spans 74-273 (PIIVIDNYDS…IKIVEKKESE (200 aa)). C152 acts as the Nucleophile in catalysis. Active-site residues include H247 and E249.

As to quaternary structure, heterotetramer consisting of two non-identical subunits: a beta subunit and a large alpha subunit. In terms of tissue distribution, expressed in the central cylinder of mature primary root zones, including pericycle and early lateral root primordia, and vasculature of cotyledons.

It localises to the plastid. It is found in the chloroplast. The catalysed reaction is chorismate + L-glutamine = anthranilate + pyruvate + L-glutamate + H(+). It participates in amino-acid biosynthesis; L-tryptophan biosynthesis; L-tryptophan from chorismate: step 1/5. Functionally, part of a heterotetrameric complex that catalyzes the two-step biosynthesis of anthranilate, an intermediate in the biosynthesis of L-tryptophan. In the first step, the glutamine-binding beta subunit of anthranilate synthase (AS) provides the glutamine amidotransferase activity which generates ammonia as a substrate that, along with chorismate, is used in the second step, catalyzed by the large alpha subunit of AS to produce anthranilate. Plays an important regulatory role in auxin production via the tryptophan-dependent biosynthetic pathway. The protein is Anthranilate synthase beta subunit 1, chloroplastic (ASB1) of Arabidopsis thaliana (Mouse-ear cress).